The primary structure comprises 306 residues: tRNA dimethylallyltransferase 2 (306 aa).

Residue 11–18 participates in ATP binding; sequence GPTASGKT. 13–18 is a binding site for substrate; it reads TASGKT. The interval 36–39 is interaction with substrate tRNA; sequence DSRQ.

The protein belongs to the IPP transferase family. Monomer. The cofactor is Mg(2+).

It catalyses the reaction adenosine(37) in tRNA + dimethylallyl diphosphate = N(6)-dimethylallyladenosine(37) in tRNA + diphosphate. Catalyzes the transfer of a dimethylallyl group onto the adenine at position 37 in tRNAs that read codons beginning with uridine, leading to the formation of N6-(dimethylallyl)adenosine (i(6)A). The polypeptide is tRNA dimethylallyltransferase 2 (Bacteroides thetaiotaomicron (strain ATCC 29148 / DSM 2079 / JCM 5827 / CCUG 10774 / NCTC 10582 / VPI-5482 / E50)).